The primary structure comprises 233 residues: uncharacterized protein (233 aa).

The next 3 membrane-spanning stretches (helical) occupy residues 78-98 (FCLIIISSWAVLPVPGGPVMY), 113-133 (FITCSYSAVLAGNAPSLLFKL), and 188-208 (FLLIRLVGVIGIADMNVYGTI).

Its subcellular location is the membrane. This is an uncharacterized protein from Saccharomyces cerevisiae (strain ATCC 204508 / S288c) (Baker's yeast).